The following is a 282-amino-acid chain: Transcription factor LBX1 (282 aa).

Positions 1 to 20 (MTSKEDGKAAPGEERRRSPL) are enriched in basic and acidic residues. The disordered stretch occupies residues 1–36 (MTSKEDGKAAPGEERRRSPLDHLPPPANSNKPLTPF). The segment at residues 125-184 (RRKSRTAFTNHQIYELEKRFLYQKYLSPADRDQIAQQLGLTNAQVITWFQNRRAKLKRDL) is a DNA-binding region (homeobox). The segment at 210-282 (ELEQNSEASG…EEDEEIDVDD (73 aa)) is disordered. The segment covering 218-227 (SGGGGGGGCG) has biased composition (gly residues). Residues 269–282 (CSEDEEDEEIDVDD) show a composition bias toward acidic residues.

As to quaternary structure, interacts with SKOR1 which acts as a transcriptional corepressor. As to expression, expressed in the dorsal part of the spinal cord and hindbrain and in presumptive myogenic cells in lateral regions of differentiating somites.

Its subcellular location is the nucleus. In terms of biological role, transcription factor required for the development of GABAergic interneurons in the dorsal horn of the spinal cord and migration and further development of hypaxial muscle precursor cells for limb muscles, diaphragm and hypoglossal cord. The sequence is that of Transcription factor LBX1 (Lbx1) from Mus musculus (Mouse).